The sequence spans 359 residues: 3-dehydroquinate synthase (359 aa).

NAD(+) contacts are provided by residues 71–76, 105–109, 129–130, Lys142, Lys151, and 169–172; these read DGEQYK, GVIGD, TT, and CLKT. Zn(2+)-binding residues include Glu184, His247, and His264.

This sequence belongs to the sugar phosphate cyclases superfamily. Dehydroquinate synthase family. Requires Co(2+) as cofactor. It depends on Zn(2+) as a cofactor. NAD(+) is required as a cofactor.

It localises to the cytoplasm. It carries out the reaction 7-phospho-2-dehydro-3-deoxy-D-arabino-heptonate = 3-dehydroquinate + phosphate. It functions in the pathway metabolic intermediate biosynthesis; chorismate biosynthesis; chorismate from D-erythrose 4-phosphate and phosphoenolpyruvate: step 2/7. Its function is as follows. Catalyzes the conversion of 3-deoxy-D-arabino-heptulosonate 7-phosphate (DAHP) to dehydroquinate (DHQ). The protein is 3-dehydroquinate synthase of Shewanella amazonensis (strain ATCC BAA-1098 / SB2B).